The sequence spans 260 residues: Proline-rich protein 33 (260 aa).

Positions 29-132 are disordered; sequence GVQTVSPRPE…KVAPKPSRSG (104 aa). Over residues 73-83 the composition is skewed to pro residues; it reads GPSPYSPPPAA.

The sequence is that of Proline-rich protein 33 (Prr33) from Mus musculus (Mouse).